Consider the following 466-residue polypeptide: Phosphomethylpyrimidine synthase (466 aa).

Substrate is bound by residues Asn-80, Met-109, Tyr-139, His-175, 195-197 (SRG), 236-239 (DSLR), and Glu-275. His-279 is a binding site for Zn(2+). Tyr-302 contacts substrate. His-343 contacts Zn(2+). [4Fe-4S] cluster-binding residues include Cys-423, Cys-426, and Cys-431.

The protein belongs to the ThiC family. Requires [4Fe-4S] cluster as cofactor.

The enzyme catalyses 5-amino-1-(5-phospho-beta-D-ribosyl)imidazole + S-adenosyl-L-methionine = 4-amino-2-methyl-5-(phosphooxymethyl)pyrimidine + CO + 5'-deoxyadenosine + formate + L-methionine + 3 H(+). Its pathway is cofactor biosynthesis; thiamine diphosphate biosynthesis. In terms of biological role, catalyzes the synthesis of the hydroxymethylpyrimidine phosphate (HMP-P) moiety of thiamine from aminoimidazole ribotide (AIR) in a radical S-adenosyl-L-methionine (SAM)-dependent reaction. The protein is Phosphomethylpyrimidine synthase of Synechococcus sp. (strain RCC307).